The primary structure comprises 92 residues: MRVNSRNIAYHELIGLEVRILQYPDPSLVGLKGKVVDETLKTLVIETPSGRRVRIFKFNSILEFMLPDGEAVVIKGSTIIGRPWDRLKMVSR.

It belongs to the eukaryotic/archaeal RNase P protein component 1 family. Consists of a catalytic RNA component and at least 4-5 protein subunits.

The protein localises to the cytoplasm. The catalysed reaction is Endonucleolytic cleavage of RNA, removing 5'-extranucleotides from tRNA precursor.. In terms of biological role, part of ribonuclease P, a protein complex that generates mature tRNA molecules by cleaving their 5'-ends. The protein is Ribonuclease P protein component 1 of Desulfurococcus amylolyticus (strain DSM 18924 / JCM 16383 / VKM B-2413 / 1221n) (Desulfurococcus kamchatkensis).